The chain runs to 159 residues: Phosphopantetheine adenylyltransferase (159 aa).

Threonine 9 serves as a coordination point for substrate. ATP contacts are provided by residues 9 to 10 (TF) and histidine 17. Substrate is bound by residues lysine 41, leucine 73, and arginine 87. Residues 88-90 (GLR), glutamate 98, and 123-129 (YAFLSST) each bind ATP.

Belongs to the bacterial CoaD family. Homohexamer. Requires Mg(2+) as cofactor.

The protein resides in the cytoplasm. The catalysed reaction is (R)-4'-phosphopantetheine + ATP + H(+) = 3'-dephospho-CoA + diphosphate. The protein operates within cofactor biosynthesis; coenzyme A biosynthesis; CoA from (R)-pantothenate: step 4/5. In terms of biological role, reversibly transfers an adenylyl group from ATP to 4'-phosphopantetheine, yielding dephospho-CoA (dPCoA) and pyrophosphate. This chain is Phosphopantetheine adenylyltransferase, found in Vibrio campbellii (strain ATCC BAA-1116).